The primary structure comprises 279 residues: Uroplakin-3b (279 aa).

The N-terminal stretch at 1–26 is a signal peptide; the sequence is MGLPSRQPRLWLLLLVVLGWPQPCLT. Residues 27–200 lie on the Lumenal side of the membrane; that stretch reads LDLIPYTPRI…DTWPGRRSGD (174 aa). N-linked (GlcNAc...) asparagine glycosylation is present at N77. Residues 201–221 form a helical membrane-spanning segment; that stretch reads MIIITSILSSLAGLLLLAFLA. Topologically, residues 222–279 are cytoplasmic; the sequence is ASSVRFSSLWWPEEAPEQLRIGSFMGKRYMTHHIPPSEAATLPVGCEPGLERFPSLSP.

Belongs to the uroplakin-3 family. In terms of assembly, heterodimer with uroplakin-1B (UPK1B). In terms of tissue distribution, expression is urothelium-specific.

The protein resides in the cell membrane. Its function is as follows. Component of the asymmetric unit membrane (AUM); a highly specialized biomembrane elaborated by terminally differentiated urothelial cells. May play an important role in AUM-cytoskeleton interaction in terminally differentiated urothelial cells. It also contributes to the formation of urothelial glycocalyx which may play an important role in preventing bacterial adherence. In Bos taurus (Bovine), this protein is Uroplakin-3b (UPK3B).